A 1644-amino-acid chain; its full sequence is Terminal uridylyltransferase 4 (1644 aa).

Disordered stretches follow at residues 31–63 (NQTL…QNDI), 96–168 (CKAK…SLLL), and 205–257 (ALQN…EMDY). The span at 36 to 46 (ARNDKSVKEIE) shows a compositional bias: basic and acidic residues. At Ser-104 the chain carries Phosphoserine. A compositionally biased stretch (polar residues) spans 112–125 (TISQAKSEKATSLQ). Phosphoserine occurs at positions 134 and 156. Over residues 206–222 (LQNSPRSQKQQTCTDNT) the composition is skewed to polar residues. The segment covering 238–252 (DLSKMKNDESNKENS) has biased composition (basic and acidic residues). Positions 253–333 (SEMDYLENAT…KEKRHKKNIL (81 aa)) are required for interaction with LIN28A and pre-let-7 RNA. Residues Cys-306, Cys-309, His-322, and His-328 each coordinate Zn(2+). A disordered region spans residues 579–617 (EKNSIAEENKAKADQPKDDTKKTETDNQSNAMKEKHGKS). Over residues 582–603 (SIAEENKAKADQPKDDTKKTET) the composition is skewed to basic and acidic residues. The 51-residue stretch at 628–678 (SLGQLWLELLKFYTLDFALEEYVICVRIQDILTRENKNWPKRRIAIEDPFS) folds into the PAP-associated 1 domain. The interval 794-816 (GQDSSSLSTSKSSEIEPKLDKKQ) is disordered. Residues 806 to 816 (SEIEPKLDKKQ) are compositionally biased toward basic and acidic residues. Residues 901 to 1634 (DKFILTSGKP…CATRRCRERC (734 aa)) form a sufficient for monouridylation activity region. The segment at 913–930 (IVCSICKKDGHSKNDCPE) adopts a CCHC-type 1 zinc-finger fold. UTP-binding positions include 998 to 1001 (SSKN), 1008 to 1011 (SDLD), Asn-1081, Lys-1103, 1121 to 1125 (SYAYI), and His-1237. Residues Asp-1009 and Asp-1011 each coordinate Mg(2+). A PAP-associated 2 domain is found at 1184–1237 (SLGELWLGLLRFYTEEFDFKEYVISIRQKKLLTTFEKQWTSKCIAIEDPFDLNH). A CCHC-type 2 zinc finger spans residues 1293 to 1310 (RCCRVCGKIGHYMKDCPK). The tract at residues 1321–1348 (KDSEEEKEGNEEEKDSRDVLDPRDLHDT) is disordered. Over residues 1334–1348 (KDSRDVLDPRDLHDT) the composition is skewed to basic and acidic residues. Residues 1357–1374 (LRCFICGDAGHVRRECPE) form a CCHC-type 3 zinc finger. Residues 1401–1426 (AGSAQQQGDQSIRTRQSSECSESPSY) are compositionally biased toward low complexity. The interval 1401-1482 (AGSAQQQGDQ…LYNFPQSPPA (82 aa)) is disordered. The segment covering 1441 to 1452 (AAITQPSSQPGS) has biased composition (polar residues). A compositionally biased stretch (low complexity) spans 1453-1470 (QPKLGPPQQGAQPPHQVQ). At Arg-1624 the chain carries Omega-N-methylarginine.

It belongs to the DNA polymerase type-B-like family. In terms of assembly, interacts with LIN28A in the presence of pre-let-7 RNA. Interacts with T2BP. Interacts with MOV10; the interaction is RNA-dependent. The cofactor is Mg(2+). Mn(2+) serves as cofactor.

The protein localises to the nucleus. The protein resides in the cytoplasm. Its subcellular location is the cytoplasmic ribonucleoprotein granule. The catalysed reaction is RNA(n) + UTP = RNA(n)-3'-uridine ribonucleotide + diphosphate. Uridylyltransferase that mediates the terminal uridylation of mRNAs with short (less than 25 nucleotides) poly(A) tails, hence facilitating global mRNA decay. Essential for both oocyte maturation and fertility. Through 3' terminal uridylation of mRNA, sculpts, with TUT7, the maternal transcriptome by eliminating transcripts during oocyte growth. Involved in microRNA (miRNA)-induced gene silencing through uridylation of deadenylated miRNA targets. Also functions as an integral regulator of microRNA biogenesis using 3 different uridylation mechanisms. Acts as a suppressor of miRNA biogenesis by mediating the terminal uridylation of some miRNA precursors, including that of let-7 (pre-let-7), miR107, miR-143 and miR-200c. Uridylated miRNAs are not processed by Dicer and undergo degradation. Degradation of pre-let-7 contributes to the maintenance of embryonic stem (ES) cell pluripotency. Also catalyzes the 3' uridylation of miR-26A, a miRNA that targets IL6 transcript. This abrogates the silencing of IL6 transcript, hence promoting cytokine expression. In the absence of LIN28A, TUT7 and TUT4 monouridylate group II pre-miRNAs, which includes most of pre-let7 members, that shapes an optimal 3' end overhang for efficient processing. Adds oligo-U tails to truncated pre-miRNAS with a 5' overhang which may promote rapid degradation of non-functional pre-miRNA species. May also suppress Toll-like receptor-induced NF-kappa-B activation via binding to T2BP. Does not play a role in replication-dependent histone mRNA degradation. Due to functional redundancy between TUT4 and TUT7, the identification of the specific role of each of these proteins is difficult. TUT4 and TUT7 restrict retrotransposition of long interspersed element-1 (LINE-1) in cooperation with MOV10 counteracting the RNA chaperonne activity of L1RE1. TUT7 uridylates LINE-1 mRNAs in the cytoplasm which inhibits initiation of reverse transcription once in the nucleus, whereas uridylation by TUT4 destabilizes mRNAs in cytoplasmic ribonucleoprotein granules. The polypeptide is Terminal uridylyltransferase 4 (Homo sapiens (Human)).